Reading from the N-terminus, the 462-residue chain is Microspherule protein 1 (462 aa).

Position 1 is an N-acetylmethionine (Met-1). The interval 1–130 (MDKDSQGLLD…KSKQPLQVTK (130 aa)) is disordered. Ser-22 carries the post-translational modification Phosphoserine. Residues 43 to 55 (PKRRSSSRFIKRK) are compositionally biased toward basic residues. Residue Ser-102 is modified to Phosphoserine. The residue at position 103 (Thr-103) is a Phosphothreonine. Pro residues predominate over residues 103–112 (TPVPPSPAPA). Ser-108 carries the phosphoserine modification. The Nuclear localization signal signature appears at 113 to 123 (PGLTKRVKKSK). Residues Lys-123 and Lys-130 each carry the N6-acetyllysine modification. A Phosphoserine modification is found at Ser-282. The stretch at 301-335 (LEHELMVADRRQKREIRQLEQELHKWQVLVDSITG) forms a coiled coil. An FHA domain is found at 363-419 (ITLGRATKDNQIDVDLSLEGPAWKISRKQGVIKLKNNGDFFIANEGRRPIYIDGRPV). Residues 389 to 396 (RKQGVIKL) carry the UBR5-degron motif.

As to quaternary structure, component of the chromatin remodeling INO80 complex; specifically part of a complex module associated with the N-terminus of INO80. Component of some MLL1/MLL complex, at least composed of the core components KMT2A/MLL1, ASH2L, HCFC1, WDR5 and RBBP5, as well as the facultative components BACC1, CHD8, E2F6, HSP70, INO80C, KANSL1, LAS1L, MAX, MCRS1, MGA, KAT8/MOF, PELP1, PHF20, PRP31, RING2, RUVB1/TIP49A, RUVB2/TIP49B, SENP3, TAF1, TAF4, TAF6, TAF7, TAF9 and TEX10. Component of the NSL complex at least composed of MOF/KAT8, KANSL1, KANSL2, KANSL3, MCRS1, PHF20, OGT1/OGT, WDR5 and HCFC1. Interacts with NOP2. Interacts with PINX1. Interacts with TERT. Interacts with CCDC85B. Interacts with DAXX. Interacts (via N-terminus) with FMR1 (via phosphorylated form). Interacts with FXR1 and FXR2. Interacts (via C-terminus) with NDE1 (via C-terminus); phosphorylation of NDE1 inhibits the interaction. Interacts (via C-terminus) with ZNF375. Interacts (via C-terminus) with active GTP-bound RHEB (via N-terminus) under conditions of high amino acid concentration; the interaction promotes mTORC1 complex activation by RHEB. Interacts (via N-terminus) with the mTORC1 complex; the interaction ensures mTORC1 activation by RHEB. Interacts with DYNC1I1; the interaction is required for the proper distribution of centriolar satellites. Interacts with TTBK2; the interaction is required for recruitment of TTBK2 to the mother centriole. Interacts with KIF2A; the interaction occurs during mitosis and facilitates chromosome alignment. In terms of assembly, (Microbial infection) Interacts with Herpes simplex virus ICP22. Post-translationally, ubiquitinated by UBR5 when not assembled in the INO80 complex, leading to its degradation: UBR5 recognizes and binds a degron that is not accessible when MCRS1 is part of the INO80 complex. In terms of processing, phosphorylated by AURKA on Ser-35 and/or Ser-36 during mitosis which is required for kinetochore fiber assembly and mitotic progression but not for spindle localization or for chromosome-induced microtuble aster formation. Also phosphorylated by AURKA on Ser-85 and/or Ser-87. Phosphorylated by TTK/MPS1 which enhances recruitment of KIF2A to the minus end of spindle microtubules and facilitates precise chromosome segregation. Detected in testis, and at lower levels in spleen, thymus, prostate, uterus, small intestine, colon and leukocytes.

It localises to the nucleus. The protein localises to the nucleolus. It is found in the cytoplasm. Its subcellular location is the cytoskeleton. The protein resides in the microtubule organizing center. It localises to the centrosome. The protein localises to the spindle pole. It is found in the chromosome. Its subcellular location is the centromere. The protein resides in the kinetochore. It localises to the lysosome. The protein localises to the centriolar satellite. In terms of biological role, modulates the transcription repressor activity of DAXX by recruiting it to the nucleolus. As part of the NSL complex, may be involved in acetylation of nucleosomal histone H4 on several lysine residues. Putative regulatory component of the chromatin remodeling INO80 complex which is involved in transcriptional regulation, DNA replication and probably DNA repair. May also be an inhibitor of TERT telomerase activity. Binds to G-quadruplex structures in mRNA. Binds to RNA homomer poly(G) and poly(U). Maintains RHEB at the lysosome in its active GTP-bound form and prevents its interaction with the mTORC1 complex inhibitor TSC2, ensuring activation of the mTORC1 complex by RHEB. Stabilizes the minus ends of kinetochore fibers by protecting them from depolymerization, ensuring functional spindle assembly during mitosis. Following phosphorylation by TTK/MPS1, enhances recruitment of KIF2A to the minus ends of mitotic spindle microtubules which promotes chromosome alignment. Regulates the morphology of microtubule minus ends in mitotic spindle by maintaining them in a closed conformation characterized by the presence of an electron-dense cap. Regulates G2/M transition and spindle assembly during oocyte meiosis. Mediates histone modifications and transcriptional regulation in germinal vesicle oocytes which are required for meiotic progression. Also regulates microtubule nucleation and spindle assembly by activating aurora kinases during oocyte meiosis. Contributes to the establishment of centriolar satellites and also plays a role in primary cilium formation by recruiting TTBK2 to the mother centriole which is necessary for removal of the CP110 cap from the mother centriole, an early step in ciliogenesis. Required for epiblast development during early embryogenesis. Essential for cell viability. The polypeptide is Microspherule protein 1 (MCRS1) (Homo sapiens (Human)).